A 64-amino-acid chain; its full sequence is Large ribosomal subunit protein uL30 (64 aa).

This sequence belongs to the universal ribosomal protein uL30 family. Part of the 50S ribosomal subunit.

This is Large ribosomal subunit protein uL30 from Syntrophus aciditrophicus (strain SB).